The following is a 65-amino-acid chain: Large ribosomal subunit protein bL35 (65 aa).

Basic residues predominate over residues Met1–Val16. The segment at Met1–Gly25 is disordered.

The protein belongs to the bacterial ribosomal protein bL35 family.

This chain is Large ribosomal subunit protein bL35, found in Bordetella parapertussis (strain 12822 / ATCC BAA-587 / NCTC 13253).